Consider the following 237-residue polypeptide: DCN1-like protein 5 (237 aa).

Serine 41 bears the Phosphoserine; by IKKA mark. In terms of domain architecture, DCUN1 spans 46–232 (FSRKKCLAWF…LLDEFVEWQK (187 aa)).

As to quaternary structure, part of a complex that contains DCUN1D5, CUL1 and RBX1; this interaction is bridged by CUL1. Interacts (via the DCUN1 domain) with the unneddylated cullins: interacts with CUL1, CUL2, CUL3, CUL4A, CUL4B and CUL5; these interactions promote the cullin neddylation and the identity of the cullin dictates the affinity of the interaction. Interacts (via DCUN1 domain) with UBE2M (N-terminally acetylated form) and probably with UBE2F (N-terminally acetylated form). May also interact with regulators or subunits of cullin-RING ligases such as RBX1, RNF7, ELOB and DDB1; these interactions are bridged by cullins. Interacts with CAND1; this interaction is bridged by cullins and strongly inhibits the neddylation of cullins. These CAND-cullin-DCNL complexes can only be neddylated in the presence of a substrate adapter. Phosphorylation at Ser-41 is independent of cullin's interaction. Phosphorylated in response to both TICAM1 and MYD88 dependent Toll-like receptor (TLR) pathway activation. Phosphorylated in response to IL1B stimulation. As to expression, highly expressed in testis. Lower levels of expression in skin, thymus, spleen, lymph nodes, lung, brain, heart, skeletal muscles, kidney, liver an ovary.

The protein localises to the nucleus. Its subcellular location is the cytoplasm. The protein resides in the cytoskeleton. It localises to the spindle. Contributes to the neddylation of all cullins by transferring NEDD8 from N-terminally acetylated NEDD8-conjugating E2s enzyme to different cullin C-terminal domain-RBX complexes which is necessary for the activation of cullin-RING E3 ubiquitin ligases (CRLs). May play a role in DNA damage response and may participate in cell proliferation and anchorage-independent cell growth. The chain is DCN1-like protein 5 from Mus musculus (Mouse).